We begin with the raw amino-acid sequence, 241 residues long: Histidine utilization repressor (241 aa).

In terms of domain architecture, HTH gntR-type spans 11 to 79 (APFYEKVKQA…QGVGTFVAEP (69 aa)). A DNA-binding region (H-T-H motif) is located at residues 39–58 (EAELVAQFGFSRMTINRALR).

It functions in the pathway amino-acid degradation; L-histidine degradation into L-glutamate [regulation]. Its function is as follows. Repressor which binds to the hutP region in the histidine utilization (hut) operon. It blocks the expression of all the hut genes in the absence of inducer. The chain is Histidine utilization repressor (hutC) from Klebsiella aerogenes (Enterobacter aerogenes).